Here is a 401-residue protein sequence, read N- to C-terminus: Exodeoxyribonuclease 7 large subunit (401 aa).

This sequence belongs to the XseA family. Heterooligomer composed of large and small subunits.

The protein resides in the cytoplasm. The enzyme catalyses Exonucleolytic cleavage in either 5'- to 3'- or 3'- to 5'-direction to yield nucleoside 5'-phosphates.. Its function is as follows. Bidirectionally degrades single-stranded DNA into large acid-insoluble oligonucleotides, which are then degraded further into small acid-soluble oligonucleotides. This Thermoanaerobacter pseudethanolicus (strain ATCC 33223 / 39E) (Clostridium thermohydrosulfuricum) protein is Exodeoxyribonuclease 7 large subunit.